The chain runs to 461 residues: Phosphoenolpyruvate carboxylase (461 aa).

It belongs to the PEPCase type 2 family. As to quaternary structure, homotetramer. Mg(2+) serves as cofactor.

The enzyme catalyses oxaloacetate + phosphate = phosphoenolpyruvate + hydrogencarbonate. Catalyzes the irreversible beta-carboxylation of phosphoenolpyruvate (PEP) to form oxaloacetate (OAA), a four-carbon dicarboxylic acid source for the tricarboxylic acid cycle. The protein is Phosphoenolpyruvate carboxylase of Pyrobaculum islandicum (strain DSM 4184 / JCM 9189 / GEO3).